The sequence spans 912 residues: Protein translocase subunit SecA (912 aa).

ATP contacts are provided by residues Gln-87, Gly-105–Thr-109, and Asp-508. Residues Asp-865–Ser-912 are disordered. Zn(2+) is bound by residues Cys-896, Cys-898, Cys-907, and His-908. Residues Lys-902 to Ser-912 show a composition bias toward basic residues.

This sequence belongs to the SecA family. As to quaternary structure, monomer and homodimer. Part of the essential Sec protein translocation apparatus which comprises SecA, SecYEG and auxiliary proteins SecDF-YajC and YidC. It depends on Zn(2+) as a cofactor.

It is found in the cell inner membrane. The protein resides in the cytoplasm. It carries out the reaction ATP + H2O + cellular proteinSide 1 = ADP + phosphate + cellular proteinSide 2.. Functionally, part of the Sec protein translocase complex. Interacts with the SecYEG preprotein conducting channel. Has a central role in coupling the hydrolysis of ATP to the transfer of proteins into and across the cell membrane, serving both as a receptor for the preprotein-SecB complex and as an ATP-driven molecular motor driving the stepwise translocation of polypeptide chains across the membrane. The sequence is that of Protein translocase subunit SecA from Xanthomonas oryzae pv. oryzae (strain MAFF 311018).